A 1082-amino-acid polypeptide reads, in one-letter code: Error-prone DNA polymerase (1082 aa).

It belongs to the DNA polymerase type-C family. DnaE2 subfamily.

Its subcellular location is the cytoplasm. It catalyses the reaction DNA(n) + a 2'-deoxyribonucleoside 5'-triphosphate = DNA(n+1) + diphosphate. Functionally, DNA polymerase involved in damage-induced mutagenesis and translesion synthesis (TLS). It is not the major replicative DNA polymerase. In Xanthomonas campestris pv. campestris (strain 8004), this protein is Error-prone DNA polymerase.